We begin with the raw amino-acid sequence, 447 residues long: Argininosuccinate synthase (447 aa).

ATP contacts are provided by residues 20–28 and Ala46; that span reads AFSGGLDTS. Position 102 (Tyr102) interacts with L-citrulline. 2 residues coordinate ATP: Gly132 and Thr134. 3 residues coordinate L-aspartate: Thr134, Asn138, and Asp139. Asn138 contacts L-citrulline. Asp139 is a binding site for ATP. The L-citrulline site is built by Arg142 and Ser195. Asp197 is an ATP binding site. Residues Thr204, Glu206, and Glu283 each coordinate L-citrulline.

The protein belongs to the argininosuccinate synthase family. Type 2 subfamily. In terms of assembly, homotetramer.

It localises to the cytoplasm. The catalysed reaction is L-citrulline + L-aspartate + ATP = 2-(N(omega)-L-arginino)succinate + AMP + diphosphate + H(+). Its pathway is amino-acid biosynthesis; L-arginine biosynthesis; L-arginine from L-ornithine and carbamoyl phosphate: step 2/3. The sequence is that of Argininosuccinate synthase from Neisseria gonorrhoeae (strain ATCC 700825 / FA 1090).